The primary structure comprises 157 residues: Cell cycle regulator of non-homologous end joining (157 aa).

Residue methionine 1 is modified to N-acetylmethionine. A KBM motif is present at residues 1 to 21 (METLQSETKTRVLPSWLTAQV). A disordered region spans residues 77-147 (KACEQPALAG…SPEEEEEEDV (71 aa)). Over residues 98-107 (VSPHTSSGSS) the composition is skewed to low complexity. Over residues 123-136 (SPSQRPGGSSSACS) the composition is skewed to polar residues. The XLM signature appears at 147–157 (VLKYVREIFFS).

As to quaternary structure, interacts (via KBM motif) with XRCC5/Ku80 and XRCC6/Ku70 heterodimer. Interacts (via XLF motif) with TRIM28/KAP1, ATM, MRE11, NBN and RAD50. Interacts with splicing factor SF3B1. Interacts with ERCC6L2; this interaction is DNA independent. Does not interact with XRCC5/Ku80 and XRCC6/Ku70 heterodimer. In terms of assembly, interacts (via KBM motif) with XRCC5/Ku80 and XRCC6/Ku70 heterodimer.

It localises to the cytoplasm. The protein localises to the nucleus. Its subcellular location is the chromosome. In terms of biological role, cell-cycle-specific regulator of classical non-homologous end joining (NHEJ) of DNA double-strand break (DSB) repair, which can act both as an activator or inhibitor of NHEJ, depending on the cell cycle phase. Acts as a regulator of DNA repair pathway choice by specifically inhibiting classical NHEJ during the S and G2 phases, thereby promoting error-free repair by homologous recombination during cell cycle phases when sister chromatids are present. Preferentially protects single-stranded overhangs at break sites by inhibiting classical NHEJ, thereby creating a local environment that favors homologous recombination. Acts via interaction with XRCC5/Ku80 and XRCC6/Ku70. In contrast, acts as an activator of NHEJ during G1 phase of the cell cycle: promotes classical NHEJ in G1 phase cells via multivalent interactions that increase the affinity of DNA damage response proteins for DSB-associated chromatin. Also involved in immunoglobulin V(D)J recombination. May also act as an indirect regulator of proteasome. The sequence is that of Cell cycle regulator of non-homologous end joining from Homo sapiens (Human).